Here is a 250-residue protein sequence, read N- to C-terminus: L-ascorbate peroxidase, cytosolic (250 aa).

His-42 functions as the Proton acceptor in the catalytic mechanism. Residues 113 to 137 (VPFHPGREDKPEPPPEGRLPDATKG) form a disordered region. Residues 117-137 (PGREDKPEPPPEGRLPDATKG) show a composition bias toward basic and acidic residues. A heme b-binding site is contributed by His-163. The K(+) site is built by Thr-164, Thr-180, Asn-182, Ile-185, and Asp-187.

This sequence belongs to the peroxidase family. Ascorbate peroxidase subfamily. The cofactor is heme b.

It localises to the cytoplasm. It carries out the reaction L-ascorbate + H2O2 = L-dehydroascorbate + 2 H2O. Functionally, plays a key role in hydrogen peroxide removal. The protein is L-ascorbate peroxidase, cytosolic (APX1) of Pisum sativum (Garden pea).